Consider the following 230-residue polypeptide: MSRASLEKDPREVATMFDAVGKNYDITNTVLSFGQDRLWRKRTRRRLDLAPGDKVLDLAAGTGVSTEELAESGAYCVAADFSLGMLRAGSHRDVPMICADGLNLPFADNTFDAVTISYGLRNLVDFRAGLREMARVTKPGGKLAIAEFSTPVIPGFATVYKEYLMRALPAVAKVVSSNPESYVYLAESIRAWPDQEELAREIRANGWENVGWQNLTGGIVALHSGTKPLD.

Residues threonine 62, aspartate 80, 100–101, and serine 117 each bind S-adenosyl-L-methionine; that span reads DG.

It belongs to the class I-like SAM-binding methyltransferase superfamily. MenG/UbiE family.

The catalysed reaction is a 2-demethylmenaquinol + S-adenosyl-L-methionine = a menaquinol + S-adenosyl-L-homocysteine + H(+). Its pathway is quinol/quinone metabolism; menaquinone biosynthesis; menaquinol from 1,4-dihydroxy-2-naphthoate: step 2/2. Functionally, methyltransferase required for the conversion of demethylmenaquinol (DMKH2) to menaquinol (MKH2). This chain is Demethylmenaquinone methyltransferase, found in Corynebacterium urealyticum (strain ATCC 43042 / DSM 7109).